A 678-amino-acid chain; its full sequence is Vacuolar fusion protein mon1 (678 aa).

Disordered regions lie at residues 1–116, 449–474, and 568–591; these read MDRD…YTSP, EENN…VTSP, and FETS…KTTE. Residues 10–20 show a composition bias toward low complexity; that stretch reads NDGTNDNNDTT. The segment covering 63–77 has biased composition (polar residues); the sequence is RPTTQVSTIDISTLS. Positions 87-105 are enriched in low complexity; that stretch reads STSATSATSATSATRSVAS. The segment covering 106-116 has biased composition (polar residues); sequence PQSSASGYTSP. Positions 450–459 are enriched in low complexity; that stretch reads ENNSNNTNNP. Pro residues predominate over residues 460-471; that stretch reads EQPPQPPPPKPV.

This sequence belongs to the MON1/SAND family.

Its subcellular location is the endosome. The protein resides in the multivesicular body membrane. It is found in the prevacuolar compartment membrane. It localises to the vacuole membrane. In terms of biological role, in complex with CCZ1, is required for multiple vacuole delivery pathways including the cytoplasm to vacuole transport (Cvt), autophagy, pexophagy and endocytosis. The MON1-CCZ1 complex acts at the fusion of vesicles with the vacuole, through its regulation of the SNARE complex during the coordinated priming and docking stages of fusion, and particularly at the stage of tethering/docking. The protein is Vacuolar fusion protein mon1 (apg-13) of Neurospora crassa (strain ATCC 24698 / 74-OR23-1A / CBS 708.71 / DSM 1257 / FGSC 987).